The following is a 170-amino-acid chain: Acireductone dioxygenase (170 aa).

Fe(2+)-binding residues include His99, His101, Glu105, and His144. His99, His101, Glu105, and His144 together coordinate Ni(2+).

This sequence belongs to the acireductone dioxygenase (ARD) family. Monomer. Fe(2+) is required as a cofactor. Ni(2+) serves as cofactor.

It carries out the reaction 1,2-dihydroxy-5-(methylsulfanyl)pent-1-en-3-one + O2 = 3-(methylsulfanyl)propanoate + CO + formate + 2 H(+). The enzyme catalyses 1,2-dihydroxy-5-(methylsulfanyl)pent-1-en-3-one + O2 = 4-methylsulfanyl-2-oxobutanoate + formate + 2 H(+). The protein operates within amino-acid biosynthesis; L-methionine biosynthesis via salvage pathway; L-methionine from S-methyl-5-thio-alpha-D-ribose 1-phosphate: step 5/6. Its function is as follows. Catalyzes 2 different reactions between oxygen and the acireductone 1,2-dihydroxy-3-keto-5-methylthiopentene (DHK-MTPene) depending upon the metal bound in the active site. Fe-containing acireductone dioxygenase (Fe-ARD) produces formate and 2-keto-4-methylthiobutyrate (KMTB), the alpha-ketoacid precursor of methionine in the methionine recycle pathway. Ni-containing acireductone dioxygenase (Ni-ARD) produces methylthiopropionate, carbon monoxide and formate, and does not lie on the methionine recycle pathway. The polypeptide is Acireductone dioxygenase (Bacillus thuringiensis subsp. konkukian (strain 97-27)).